The chain runs to 127 residues: Small ribosomal subunit protein uS11 (127 aa).

It belongs to the universal ribosomal protein uS11 family. In terms of assembly, part of the 30S ribosomal subunit. Interacts with proteins S7 and S18. Binds to IF-3.

In terms of biological role, located on the platform of the 30S subunit, it bridges several disparate RNA helices of the 16S rRNA. Forms part of the Shine-Dalgarno cleft in the 70S ribosome. This Streptococcus agalactiae serotype Ia (strain ATCC 27591 / A909 / CDC SS700) protein is Small ribosomal subunit protein uS11.